The following is a 555-amino-acid chain: CTP synthase (555 aa).

An amidoligase domain region spans residues 1 to 271; that stretch reads MVKRGKKTKY…DDKLAELFNI (271 aa). Position 19 (Ser19) interacts with CTP. Ser19 contributes to the UTP binding site. ATP contacts are provided by residues 20–25 and Asp77; that span reads SLGKGL. 2 residues coordinate Mg(2+): Asp77 and Glu145. Residues 152–154, 192–197, and Lys228 contribute to the CTP site; these read DIE and KTKPTQ. UTP contacts are provided by residues 192 to 197 and Lys228; that span reads KTKPTQ. The Glutamine amidotransferase type-1 domain maps to 297 to 537; sequence RIGIVGKYVE…VKAALEHRDA (241 aa). L-glutamine is bound at residue Gly358. Cys385 serves as the catalytic Nucleophile; for glutamine hydrolysis. L-glutamine contacts are provided by residues 386-389, Glu409, and Arg466; that span reads LGLQ. Residues His510 and Glu512 contribute to the active site. Positions 535 to 555 are disordered; it reads RDAQQRQPPAEVKKLAVGKNG.

It belongs to the CTP synthase family. Homotetramer.

It catalyses the reaction UTP + L-glutamine + ATP + H2O = CTP + L-glutamate + ADP + phosphate + 2 H(+). The catalysed reaction is L-glutamine + H2O = L-glutamate + NH4(+). The enzyme catalyses UTP + NH4(+) + ATP = CTP + ADP + phosphate + 2 H(+). The protein operates within pyrimidine metabolism; CTP biosynthesis via de novo pathway; CTP from UDP: step 2/2. Its activity is regulated as follows. Allosterically activated by GTP, when glutamine is the substrate; GTP has no effect on the reaction when ammonia is the substrate. The allosteric effector GTP functions by stabilizing the protein conformation that binds the tetrahedral intermediate(s) formed during glutamine hydrolysis. Inhibited by the product CTP, via allosteric rather than competitive inhibition. In terms of biological role, catalyzes the ATP-dependent amination of UTP to CTP with either L-glutamine or ammonia as the source of nitrogen. Regulates intracellular CTP levels through interactions with the four ribonucleotide triphosphates. The chain is CTP synthase from Anaeromyxobacter dehalogenans (strain 2CP-1 / ATCC BAA-258).